We begin with the raw amino-acid sequence, 603 residues long: MDTLFRLVSLHHHHHHQHAASPSPPDQPHKSYPSSRGSTSSPSSHHTHNHTYYHHSHSHYNNNSNTNYYYQGGGGGGGGYYYAEEQQPAAYLEECGNGHQFYMDEDFSSSSSSRQFHSGTGAPSSAPVPPPPSATTSSAGGHGLFEAADFSFPQVDISLDFGGSPAVPSSSGAGAGAGAAPSSSGRWAAQLLMECARAVAGRDSQRVQQLMWMLNELASPYGDVDQKLASYFLQGLFARLTTSGPRTLRTLATASDRNASFDSTRRTALKFQELSPWTPFGHVAANGAILESFLEAAAAGAAAASSSSSSSSTPPTRLHILDLSNTFCTQWPTLLEALATRSSDDTPHLSITTVVPTAAPSAAAQRVMREIGQRLEKFARLMGVPFSFRAVHHAGDLADLDLAALDLREGGATAALAVNCVNALRGVARGRDAFVASLRRLEPRVVTVVEEEADLAAPEADASSEADTDAAFVKVFGEGLRFFSAYMDSLEESFPKTSNERLSLERAVGRAIVDLVSCPASQSAERRETAASWARRMRSAGFSPAAFSEDVADDVRSLLRRYKEGWSMRDAGGATDDAAGAAAAGAFLAWKEQPVVWASAWKP.

Disordered regions lie at residues 11 to 58 and 106 to 140; these read HHHH…HSHS and DFSSSSSSRQFHSGTGAPSSAPVPPPPSATTSSAG. Low complexity predominate over residues 31 to 44; sequence SYPSSRGSTSSPSS. Over residues 45-58 the composition is skewed to basic residues; sequence HHTHNHTYYHHSHS. Low complexity predominate over residues 108–125; sequence SSSSSSRQFHSGTGAPSS. A GRAS domain is found at 179–602; that stretch reads AAPSSSGRWA…QPVVWASAWK (424 aa). Positions 186–249 are leucine repeat I (LRI); that stretch reads RWAAQLLMEC…LTTSGPRTLR (64 aa). Residues 268–354 form a VHIID region; it reads ALKFQELSPW…DTPHLSITTV (87 aa). The short motif at 318–322 is the VHIID element; it reads LHILD. The leucine repeat II (LRII) stretch occupies residues 370–406; sequence EIGQRLEKFARLMGVPFSFRAVHHAGDLADLDLAALD. The tract at residues 416–514 is PFYRE; the sequence is LAVNCVNALR…ERAVGRAIVD (99 aa). Residues 517 to 602 form an SAW region; it reads SCPASQSAER…QPVVWASAWK (86 aa).

The protein belongs to the GRAS family. In terms of assembly, does not interact with SCR1.

The protein resides in the nucleus. Its function is as follows. Putative transcription factor involved in asymmetric cell division. The chain is Protein SHORT-ROOT 2 (SHR2) from Oryza sativa subsp. indica (Rice).